Reading from the N-terminus, the 149-residue chain is NPC intracellular cholesterol transporter 2 (149 aa).

Positions 1 to 19 (MRFLAATILLLALVAASQA) are cleaved as a signal peptide. Cystine bridges form between C27/C140, C42/C47, and C93/C99. N58 and N69 each carry an N-linked (GlcNAc...) asparagine glycan. K116 carries the N6-acetyllysine modification.

It belongs to the NPC2 family. Interacts with NPC1 (via the second lumenal domain) in a cholestrol-dependent manner. Interacts with NUS1/NgBR, the interaction stabilizes NCP2 and regulates cholesterol trafficking. Interacts with DHDDS. Interacts with NEDD4L (via C2 domain). Interacts with NPC1L1. Post-translationally, N-glycosylated. Detected in liver and bile. Detected in epididymis (at protein level). Detected in caput epididymis, corpus epididymis, cauda epididymis and ovary.

The protein resides in the secreted. Its subcellular location is the endoplasmic reticulum. It is found in the lysosome. It carries out the reaction cholesterol(in) = cholesterol(out). Its function is as follows. Intracellular cholesterol transporter which acts in concert with NPC1 and plays an important role in the egress of cholesterol from the lysosomal compartment. Unesterified cholesterol that has been released from LDLs in the lumen of the late endosomes/lysosomes is transferred by NPC2 to the cholesterol-binding pocket in the N-terminal domain of NPC1. May bind and mobilize cholesterol that is associated with membranes. NPC2 binds cholesterol with a 1:1 stoichiometry. Can bind a variety of sterols, including lathosterol, desmosterol and the plant sterols stigmasterol and beta-sitosterol. The secreted form of NCP2 regulates biliary cholesterol secretion via stimulation of ABCG5/ABCG8-mediated cholesterol transport. The sequence is that of NPC intracellular cholesterol transporter 2 from Mus musculus (Mouse).